Consider the following 230-residue polypeptide: Fibronectin type III domain-containing protein 4 (230 aa).

Residues 1–40 (MPGCLPADSVGTMASLMPLSPYLSPTVLLLVSCDLGFVRA) form the signal peptide. The Extracellular portion of the chain corresponds to 41 to 163 (DRPPSPVNVT…GLDGERPLQT (123 aa)). The Fibronectin type-III domain maps to 43–136 (PPSPVNVTVT…PRVHFRTLKG (94 aa)). N48 and N143 each carry an N-linked (GlcNAc...) asparagine glycan. A disordered region spans residues 118–156 (GLRGESPPGPRVHFRTLKGSDRLPSNSSSPGDITVEGLD). The helical transmembrane segment at 164–184 (GEVVIIVVVLLMWAAVIGLFC) threads the bilayer. The Cytoplasmic portion of the chain corresponds to 185 to 230 (RQYDIIKDNDSNNNPKEKGKGPEQSPQGRPVGTRQKKSPSINTIDV). Positions 193-205 (NDSNNNPKEKGKG) are enriched in basic and acidic residues. A disordered region spans residues 193–230 (NDSNNNPKEKGKGPEQSPQGRPVGTRQKKSPSINTIDV).

It localises to the membrane. The protein localises to the secreted. Its function is as follows. Has anti-inflammatory properties. In the colon, acts on macrophages to down-regulate inflammation. May suppress osteoclastogenesis and mature osteoclast resorptive function. In white adipose tissue, decreases local inflammation, via interaction with GPR116. Also required for proper systemic glucose tolerance, specifically sensitizing white adipocytes to insulin and promoting glucose uptake. The insulin sensitizing function in adipose tissue is mediated by interaction with ADGRF5/GPR116 and activation of cAMP signaling. This chain is Fibronectin type III domain-containing protein 4 (FNDC4), found in Bos taurus (Bovine).